The primary structure comprises 954 residues: Bifunctional glutamine synthetase adenylyltransferase/adenylyl-removing enzyme (954 aa).

The segment at 1 to 452 (MAVQKDSNKS…HFKATVGGEE (452 aa)) is adenylyl removase. The adenylyl transferase stretch occupies residues 458 to 954 (EHWTAQLWNV…ILAIYQAILE (497 aa)).

This sequence belongs to the GlnE family. Mg(2+) serves as cofactor.

It catalyses the reaction [glutamine synthetase]-O(4)-(5'-adenylyl)-L-tyrosine + phosphate = [glutamine synthetase]-L-tyrosine + ADP. The catalysed reaction is [glutamine synthetase]-L-tyrosine + ATP = [glutamine synthetase]-O(4)-(5'-adenylyl)-L-tyrosine + diphosphate. In terms of biological role, involved in the regulation of glutamine synthetase GlnA, a key enzyme in the process to assimilate ammonia. When cellular nitrogen levels are high, the C-terminal adenylyl transferase (AT) inactivates GlnA by covalent transfer of an adenylyl group from ATP to specific tyrosine residue of GlnA, thus reducing its activity. Conversely, when nitrogen levels are low, the N-terminal adenylyl removase (AR) activates GlnA by removing the adenylyl group by phosphorolysis, increasing its activity. The regulatory region of GlnE binds the signal transduction protein PII (GlnB) which indicates the nitrogen status of the cell. This chain is Bifunctional glutamine synthetase adenylyltransferase/adenylyl-removing enzyme, found in Shewanella oneidensis (strain ATCC 700550 / JCM 31522 / CIP 106686 / LMG 19005 / NCIMB 14063 / MR-1).